Here is a 227-residue protein sequence, read N- to C-terminus: Peroxisomal membrane protein 11B (227 aa).

Residues 1–85 (MSLDTVDKLV…RNPGATPMIR (85 aa)) lie on the Cytoplasmic side of the membrane. The helical transmembrane segment at 86–106 (FLAVLANSGEMVYFFFDHFLW) threads the bilayer. Over 107-201 (LSRIGSIDAK…IALAEIHPNP (95 aa)) the chain is Lumenal. A helical membrane pass occupies residues 202–222 (FCNHTITLGISGLVSAWAGWY). The Cytoplasmic portion of the chain corresponds to 223 to 227 (RNWPS).

It belongs to the peroxin-11 family. Homooligomer. Interacts with ARC5 and FIS1B on peroxisomes. As to expression, expressed in roots, leaves and developing siliques.

Its subcellular location is the peroxisome membrane. In terms of biological role, involved in peroxisomal proliferation. Promotes peroxisomal duplication, aggregation or elongation without fission. In Arabidopsis thaliana (Mouse-ear cress), this protein is Peroxisomal membrane protein 11B (PEX11B).